The chain runs to 733 residues: Submandibular gland protein C (733 aa).

Residues 1–20 (MKLILLYLAVVLCFVGKARS) form the signal peptide. The disordered stretch occupies residues 48 to 91 (KSSGGSKDYNLSDGGKSNSRKNLSPATGGSATQQSNLDDSHAPN). Asn57 carries an N-linked (GlcNAc...) asparagine glycan. The segment covering 62–84 (GKSNSRKNLSPATGGSATQQSNL) has biased composition (polar residues). Asn141 and Asn187 each carry an N-linked (GlcNAc...) asparagine glycan. 4 disordered regions span residues 172 to 204 (GQQA…ADKP), 249 to 330 (LTED…NSSN), 369 to 450 (LTED…NSSN), and 496 to 733 (SVTE…PSVA). Over residues 186 to 199 (ENSSLSTGSATSNK) the composition is skewed to polar residues. Residues 256–270 (TSTSASVSGDSSTSS) show a composition bias toward low complexity. Polar residues predominate over residues 300–318 (GSKQNVEDSTLSTGSATSN). An N-linked (GlcNAc...) asparagine glycan is attached at Asn327. Over residues 376 to 390 (TSTSASVSGDSSTSS) the composition is skewed to low complexity. A compositionally biased stretch (polar residues) spans 420–438 (GSKQNVEDSTLSTGSATSN). Asn447, Asn514, and Asn528 each carry an N-linked (GlcNAc...) asparagine glycan. 2 stretches are compositionally biased toward polar residues: residues 496 to 516 (SVTE…NNLS) and 525 to 535 (NPTNGSSSASS). Positions 538–552 (KPYEEGMRKLLKFLE) are enriched in basic and acidic residues. Composition is skewed to low complexity over residues 563 to 574 (SVSGMSSESSRS) and 609 to 619 (SSNSSTGSATS). An N-linked (GlcNAc...) asparagine glycan is attached at Asn611. The span at 654 to 665 (GFNGPEGVGENN) shows a compositional bias: gly residues. Low complexity predominate over residues 677–701 (GSKSDSGSHNLSSGSGSRSNVSTGG). Asn686 and Asn696 each carry an N-linked (GlcNAc...) asparagine glycan. Positions 722-733 (TGKTQSGSPSVA) are enriched in polar residues.

Post-translationally, N-glycosylated. As to expression, detected in terminal tubule cells of the submandibular gland (at protein level). Expressed in submandibular salivary glands of 3-day-old males but not adults. Expression in adult submandibular glands is restricted to females. Isoform 5 is expressed in both 3-day-old and adult sublingual glands.

It is found in the secreted. The polypeptide is Submandibular gland protein C (Muc19) (Mus musculus (Mouse)).